Consider the following 82-residue polypeptide: ATP synthase subunit c, chloroplastic (82 aa).

2 helical membrane passes run 3-23 (PIVA…AAIG) and 57-77 (FAFM…LLFA).

This sequence belongs to the ATPase C chain family. F-type ATPases have 2 components, F(1) - the catalytic core - and F(0) - the membrane proton channel. F(1) has five subunits: alpha(3), beta(3), gamma(1), delta(1), epsilon(1). F(0) has four main subunits: a(1), b(1), b'(1) and c(10-14). The alpha and beta chains form an alternating ring which encloses part of the gamma chain. F(1) is attached to F(0) by a central stalk formed by the gamma and epsilon chains, while a peripheral stalk is formed by the delta, b and b' chains.

The protein localises to the plastid. It is found in the chloroplast thylakoid membrane. In terms of biological role, f(1)F(0) ATP synthase produces ATP from ADP in the presence of a proton or sodium gradient. F-type ATPases consist of two structural domains, F(1) containing the extramembraneous catalytic core and F(0) containing the membrane proton channel, linked together by a central stalk and a peripheral stalk. During catalysis, ATP synthesis in the catalytic domain of F(1) is coupled via a rotary mechanism of the central stalk subunits to proton translocation. Functionally, key component of the F(0) channel; it plays a direct role in translocation across the membrane. A homomeric c-ring of between 10-14 subunits forms the central stalk rotor element with the F(1) delta and epsilon subunits. This Tetradesmus obliquus (Green alga) protein is ATP synthase subunit c, chloroplastic.